A 300-amino-acid chain; its full sequence is Porphobilinogen deaminase (300 aa).

Residue cysteine 242 is modified to S-(dipyrrolylmethanemethyl)cysteine.

The protein belongs to the HMBS family. As to quaternary structure, monomer. Dipyrromethane is required as a cofactor.

The catalysed reaction is 4 porphobilinogen + H2O = hydroxymethylbilane + 4 NH4(+). The protein operates within porphyrin-containing compound metabolism; protoporphyrin-IX biosynthesis; coproporphyrinogen-III from 5-aminolevulinate: step 2/4. In terms of biological role, tetrapolymerization of the monopyrrole PBG into the hydroxymethylbilane pre-uroporphyrinogen in several discrete steps. The protein is Porphobilinogen deaminase of Rickettsia bellii (strain OSU 85-389).